Consider the following 2157-residue polypeptide: Mediator of RNA polymerase II transcription subunit 12-like protein (2157 aa).

The interval methionine 1 to glutamine 31 is disordered. Threonine 462 bears the Phosphothreonine mark. The span at glutamate 1437 to lysine 1456 shows a compositional bias: basic and acidic residues. Disordered regions lie at residues glutamate 1437–serine 1461, arginine 1724–threonine 1807, and isoleucine 2040–phenylalanine 2157. Over residues threonine 1771–serine 1780 the composition is skewed to basic residues. Low complexity-rich tracts occupy residues proline 2063–glutamine 2076, glutamine 2083–alanine 2101, and arginine 2116–glutamine 2136. Polar residues predominate over residues lysine 2137–valine 2148.

This sequence belongs to the Mediator complex subunit 12 family. In terms of assembly, may be a component of the Mediator complex, which is known to be composed of MED1, MED4, MED6, MED7, MED8, MED9, MED10, MED11, MED12, MED13, MED13L, MED14, MED15, MED16, MED17, MED18, MED19, MED20, MED21, MED22, MED23, MED24, MED25, MED26, MED27, MED29, MED30, MED31, CCNC, CDK8 and CDC2L6/CDK11. The MED12, MED13, CCNC and CDK8 subunits form a distinct module termed the CDK8 module. Mediator containing the CDK8 module is less active than Mediator lacking this module in supporting transcriptional activation. Individual preparations of the Mediator complex lacking one or more distinct subunits have been variously termed ARC, CRSP, DRIP, PC2, SMCC and TRAP.

The protein resides in the nucleus. In terms of biological role, may be a component of the Mediator complex, a coactivator involved in the regulated transcription of nearly all RNA polymerase II-dependent genes. Mediator functions as a bridge to convey information from gene-specific regulatory proteins to the basal RNA polymerase II transcription machinery. Mediator is recruited to promoters by direct interactions with regulatory proteins and serves as a scaffold for the assembly of a functional preinitiation complex with RNA polymerase II and the general transcription factors. The sequence is that of Mediator of RNA polymerase II transcription subunit 12-like protein (Med12l) from Mus musculus (Mouse).